A 79-amino-acid chain; its full sequence is Small ribosomal subunit protein bS18 (79 aa).

It belongs to the bacterial ribosomal protein bS18 family. In terms of assembly, part of the 30S ribosomal subunit. Forms a tight heterodimer with protein bS6.

Its function is as follows. Binds as a heterodimer with protein bS6 to the central domain of the 16S rRNA, where it helps stabilize the platform of the 30S subunit. This Aster yellows witches'-broom phytoplasma (strain AYWB) protein is Small ribosomal subunit protein bS18.